The primary structure comprises 185 residues: Ribosome-recycling factor (185 aa).

The protein belongs to the RRF family.

The protein resides in the cytoplasm. Functionally, responsible for the release of ribosomes from messenger RNA at the termination of protein biosynthesis. May increase the efficiency of translation by recycling ribosomes from one round of translation to another. The chain is Ribosome-recycling factor from Shewanella denitrificans (strain OS217 / ATCC BAA-1090 / DSM 15013).